Consider the following 207-residue polypeptide: ATP-dependent Clp protease proteolytic subunit 1 (207 aa).

The active-site Nucleophile is the Ser-103. Residue His-128 is part of the active site.

Belongs to the peptidase S14 family. Fourteen ClpP subunits assemble into 2 heptameric rings which stack back to back to give a disk-like structure with a central cavity, resembling the structure of eukaryotic proteasomes.

It is found in the cytoplasm. It catalyses the reaction Hydrolysis of proteins to small peptides in the presence of ATP and magnesium. alpha-casein is the usual test substrate. In the absence of ATP, only oligopeptides shorter than five residues are hydrolyzed (such as succinyl-Leu-Tyr-|-NHMec, and Leu-Tyr-Leu-|-Tyr-Trp, in which cleavage of the -Tyr-|-Leu- and -Tyr-|-Trp bonds also occurs).. Cleaves peptides in various proteins in a process that requires ATP hydrolysis. Has a chymotrypsin-like activity. Plays a major role in the degradation of misfolded proteins. The protein is ATP-dependent Clp protease proteolytic subunit 1 of Synechococcus sp. (strain CC9605).